We begin with the raw amino-acid sequence, 725 residues long: Calcium-responsive transcription factor (725 aa).

Residues 572–592 (TSPDESPAVVSVNNQPSSSPS) form a disordered region. Residues 577-592 (SPAVVSVNNQPSSSPS) show a composition bias toward low complexity.

The protein localises to the nucleus. In terms of biological role, acts as a transcriptional activator that mediates the calcium- and neuron-selective induction of BDNF exon III transcription. Binds to the consensus calcium-response element CaRE1 5'-CTATTTCGAG-3' sequence. The sequence is that of Calcium-responsive transcription factor (CARF) from Homo sapiens (Human).